We begin with the raw amino-acid sequence, 188 residues long: ATP synthase subunit b (188 aa).

A helical membrane pass occupies residues 19 to 39 (LPAVYDIVWSAVVFVVLLVVI).

Belongs to the ATPase B chain family. In terms of assembly, F-type ATPases have 2 components, F(1) - the catalytic core - and F(0) - the membrane proton channel. F(1) has five subunits: alpha(3), beta(3), gamma(1), delta(1), epsilon(1). F(0) has three main subunits: a(1), b(2) and c(10-14). The alpha and beta chains form an alternating ring which encloses part of the gamma chain. F(1) is attached to F(0) by a central stalk formed by the gamma and epsilon chains, while a peripheral stalk is formed by the delta and b chains.

It localises to the cell membrane. Its function is as follows. F(1)F(0) ATP synthase produces ATP from ADP in the presence of a proton or sodium gradient. F-type ATPases consist of two structural domains, F(1) containing the extramembraneous catalytic core and F(0) containing the membrane proton channel, linked together by a central stalk and a peripheral stalk. During catalysis, ATP synthesis in the catalytic domain of F(1) is coupled via a rotary mechanism of the central stalk subunits to proton translocation. In terms of biological role, component of the F(0) channel, it forms part of the peripheral stalk, linking F(1) to F(0). This Clavibacter michiganensis subsp. michiganensis (strain NCPPB 382) protein is ATP synthase subunit b.